Consider the following 807-residue polypeptide: Tyrosine-protein kinase receptor torso (807 aa).

Residues 1 to 28 form the signal peptide; the sequence is MYSEGKLLKVFLIFAGFIIFSLCGEVVS. Topologically, residues 29–370 are extracellular; it reads QRYPPAPGLL…RAFTPGMLRW (342 aa). Cystine bridges form between cysteine 46-cysteine 61, cysteine 81-cysteine 203, cysteine 210-cysteine 239, and cysteine 259-cysteine 265. Residues asparagine 54, asparagine 171, asparagine 183, and asparagine 195 are each glycosylated (N-linked (GlcNAc...) asparagine). 3 N-linked (GlcNAc...) asparagine glycosylation sites follow: asparagine 307, asparagine 323, and asparagine 344. A helical membrane pass occupies residues 371 to 391; it reads VWAGATAGAGCAAGGLLAATL. The Cytoplasmic segment spans residues 392 to 807; the sequence is LCCGHRRATS…SPPVIQTKTA (416 aa). Positions 439–738 constitute a Protein kinase domain; it reads VLLHEVIGEG…PTFPELHQKL (300 aa). ATP-binding positions include 445–453 and lysine 468; that span reads IGEGAFGVV. Aspartate 607 acts as the Proton acceptor in catalysis.

This sequence belongs to the protein kinase superfamily. Tyr protein kinase family. In terms of assembly, homodimer; disulfide-linked. Mg(2+) is required as a cofactor. Post-translationally, may be auto-phosphorylated on tyrosine residues. At least one of the 3 cysteine residues Cys-381, Cys-393 or Cys-394 is involved in the formation of interchain disulfide bonds. The disulfide bond sites in the extracellular region are not involved in homodimer formation.

Its subcellular location is the cell membrane. It carries out the reaction L-tyrosyl-[protein] + ATP = O-phospho-L-tyrosyl-[protein] + ADP + H(+). In terms of biological role, probable receptor tyrosine kinase. During postembryonic development, involved in the initiation of metamorphosis probably by inducing the production of ecdysone in response to prothoracicotropic hormone (PTTH). Binding to PTTH stimulates activation of canonical MAPK signaling leading to ERK phosphorylation. The polypeptide is Tyrosine-protein kinase receptor torso (Bombyx mori (Silk moth)).